Consider the following 622-residue polypeptide: Phosphatidylinositol 4-kinase gamma 6 (622 aa).

In terms of domain architecture, Ubiquitin-like; degenerate spans 38-95 (RRVFVQTDTGCVLGVELDRNDNVHTVKKRLQIAFNFPTEESSLTFGDMVLKNDLSAVR). A PI3K/PI4K catalytic domain is found at 158–459 (GVEPIPVNGG…LTTEQDVLSP (302 aa)). The interval 164 to 170 (VNGGLGG) is G-loop. ATP contacts are provided by residues 165–171 (NGGLGGA), Lys-186, and 277–280 (QKFV). The segment at 310 to 318 (LNTDRHGGN) is catalytic loop. The tract at residues 339–365 (PIDHGLCLPETLEDPYFEWIHWPQASI) is activation loop. Asp-341 provides a ligand contact to ATP. Ser-565 carries the post-translational modification Phosphoserine.

The protein belongs to the PI3/PI4-kinase family. Type II PI4K subfamily.

The catalysed reaction is a 1,2-diacyl-sn-glycero-3-phospho-(1D-myo-inositol) + ATP = a 1,2-diacyl-sn-glycero-3-phospho-(1D-myo-inositol 4-phosphate) + ADP + H(+). In terms of biological role, the phosphorylation of phosphatidylinositol (PI) to PI4P is the first committed step in the generation of phosphatidylinositol 4,5-bisphosphate (PIP2), a precursor of the second messenger inositol 1,4,5-trisphosphate (InsP3). The chain is Phosphatidylinositol 4-kinase gamma 6 (PI4KG6) from Arabidopsis thaliana (Mouse-ear cress).